Consider the following 234-residue polypeptide: Glutathione S-transferase 1 (234 aa).

The GST N-terminal domain occupies 3–90 (LPIIKVHWLD…YVLQHFDHSH (88 aa)). The GST C-terminal domain maps to 96-234 (DADIADQINY…EKARALGSNF (139 aa)).

It belongs to the GST superfamily. In terms of assembly, homodimer.

Its subcellular location is the endoplasmic reticulum membrane. The catalysed reaction is RX + glutathione = an S-substituted glutathione + a halide anion + H(+). The chain is Glutathione S-transferase 1 (GTT1) from Saccharomyces cerevisiae (strain ATCC 204508 / S288c) (Baker's yeast).